The following is a 382-amino-acid chain: Galactokinase (382 aa).

A substrate-binding site is contributed by 34-37; sequence EHTD. 124–130 contributes to the ATP binding site; that stretch reads GAGLSSS. The Mg(2+) site is built by Ser130 and Glu162. Residue Asp174 is the Proton acceptor of the active site. Tyr223 provides a ligand contact to substrate.

The protein belongs to the GHMP kinase family. GalK subfamily.

The protein localises to the cytoplasm. It carries out the reaction alpha-D-galactose + ATP = alpha-D-galactose 1-phosphate + ADP + H(+). It participates in carbohydrate metabolism; galactose metabolism. Catalyzes the transfer of the gamma-phosphate of ATP to D-galactose to form alpha-D-galactose-1-phosphate (Gal-1-P). The protein is Galactokinase of Enterobacter sp. (strain 638).